The following is a 115-amino-acid chain: Superoxide reductase (115 aa).

The Fe cation site is built by E14, H16, H41, H47, C102, and H105.

The protein belongs to the desulfoferrodoxin family. In terms of assembly, homotetramer. Fe cation serves as cofactor.

The catalysed reaction is reduced [rubredoxin] + superoxide + 2 H(+) = oxidized [rubredoxin] + H2O2. Uses electrons from reduced NADP, by way of rubredoxin and an oxidoreductase, to catalyze the reduction of superoxide to hydrogen peroxide. The polypeptide is Superoxide reductase (sorA) (Pyrococcus abyssi (strain GE5 / Orsay)).